Consider the following 470-residue polypeptide: UDP-glycosyltransferase 72D1 (470 aa).

UDP-alpha-D-glucose is bound by residues Ser-276, 343-345, 360-368, and 382-385; these read APQ, HCGWSSALE, and YAEQ.

The protein belongs to the UDP-glycosyltransferase family.

This chain is UDP-glycosyltransferase 72D1 (UGT72D1), found in Arabidopsis thaliana (Mouse-ear cress).